Here is a 146-residue protein sequence, read N- to C-terminus: Stress enhanced protein 1, chloroplastic (146 aa).

A chloroplast-targeting transit peptide spans 1–73 (MALSQVSASL…GNRAASVSIR (73 aa)). Transmembrane regions (helical) follow at residues 84–104 (LDIW…TVEI) and 120–140 (LPTV…VFIF).

Belongs to the ELIP/psbS family.

It is found in the plastid. It localises to the chloroplast thylakoid membrane. Its function is as follows. May be involved in non-photochemical quenching, a process that maintains the balance between dissipation and utilization of light energy to minimize generation of oxidizing molecules, thereby protecting the plant against photo-oxidative damage. May play a photoprotective role in the thylakoid membrane in response to light stress. The protein is Stress enhanced protein 1, chloroplastic of Arabidopsis thaliana (Mouse-ear cress).